The primary structure comprises 372 residues: Cytochrome b (372 aa).

A run of 4 helical transmembrane segments spans residues 32-52 (LGFNLGVMIALQILVGICLSW), 77-99 (FIIRSLHIIFTSLLYFLLYIHII), 114-134 (VWFFGFLIFIFILIIAFIGYT), and 180-200 (LHSIHIFLPFVLLFLIGAHFF). 2 residues coordinate heme b: histidine 83 and histidine 97. Positions 184 and 198 each coordinate heme b. An a ubiquinone-binding site is contributed by histidine 203. 4 consecutive transmembrane segments (helical) span residues 228–248 (YYLRDLFLIINILCFLIYYIC), 297–317 (LLFVLCFALFLFILNCILIFI), 330–350 (LVLFYYLCVGGFLSLYVVLCF), and 351–371 (PLWMEIQFWVLLLFCFIVCRL).

Belongs to the cytochrome b family. The main subunits of complex b-c1 are: cytochrome b, cytochrome c1 and the Rieske protein. The cofactor is heme b.

It is found in the mitochondrion inner membrane. In terms of biological role, component of the ubiquinol-cytochrome c reductase complex (complex III or cytochrome b-c1 complex) that is part of the mitochondrial respiratory chain. The b-c1 complex mediates electron transfer from ubiquinol to cytochrome c. Contributes to the generation of a proton gradient across the mitochondrial membrane that is then used for ATP synthesis. The protein is Cytochrome b (MT-CYB) of Trypanoplasma borreli.